We begin with the raw amino-acid sequence, 457 residues long: tRNA-2-methylthio-N(6)-dimethylallyladenosine synthase (457 aa).

The region spanning 3–120 (KKVYVKTFGC…LPQMIDARRE (118 aa)) is the MTTase N-terminal domain. The [4Fe-4S] cluster site is built by cysteine 12, cysteine 49, cysteine 83, cysteine 157, cysteine 161, and cysteine 164. Residues 143–377 (RVEGPSAFVS…QATIEENVAR (235 aa)) enclose the Radical SAM core domain. Positions 380-447 (QSMLGKVERI…PHSLRGELVL (68 aa)) constitute a TRAM domain.

It belongs to the methylthiotransferase family. MiaB subfamily. Monomer. Requires [4Fe-4S] cluster as cofactor.

The protein resides in the cytoplasm. It catalyses the reaction N(6)-dimethylallyladenosine(37) in tRNA + (sulfur carrier)-SH + AH2 + 2 S-adenosyl-L-methionine = 2-methylsulfanyl-N(6)-dimethylallyladenosine(37) in tRNA + (sulfur carrier)-H + 5'-deoxyadenosine + L-methionine + A + S-adenosyl-L-homocysteine + 2 H(+). Catalyzes the methylthiolation of N6-(dimethylallyl)adenosine (i(6)A), leading to the formation of 2-methylthio-N6-(dimethylallyl)adenosine (ms(2)i(6)A) at position 37 in tRNAs that read codons beginning with uridine. This Burkholderia mallei (strain NCTC 10247) protein is tRNA-2-methylthio-N(6)-dimethylallyladenosine synthase.